A 761-amino-acid chain; its full sequence is uncharacterized protein (761 aa).

The CR-type zinc-finger motif lies at 1–84; it reads MIVKCPICDG…CGGSGKVVKC (84 aa). Residues 135–200 form the S1 motif domain; it reads GKFYKGVVTR…EKREIDFKYI (66 aa).

This is an uncharacterized protein from Methanocaldococcus jannaschii (strain ATCC 43067 / DSM 2661 / JAL-1 / JCM 10045 / NBRC 100440) (Methanococcus jannaschii).